The sequence spans 208 residues: MKLLPSVVLKLFLAAVLSALVTGESLERLRRGLAAGTSNPDPPTVSTDQLLPLGGGRDRKVRDLQEADLDLLRVTLSSKPQALATPNKEEHGKRKKKGKGLGKKRDPCLRKYKDFCIHGECKYVKELRAPSCICHPGYHGERCHGLSLPVENRLYTYDHTTILAVVAVVLSSVCLLVIVGLLMFRYHRRGGYDVENEEKVKLGMTNSH.

The first 19 residues, 1–19, serve as a signal peptide directing secretion; sequence MKLLPSVVLKLFLAAVLSA. Positions 20-62 are cleaved as a propeptide — or 72, or 73, or 76, or 81; sequence LVTGESLERLRRGLAAGTSNPDPPTVSTDQLLPLGGGRDRKVR. The Extracellular portion of the chain corresponds to 20–160; the sequence is LVTGESLERL…ENRLYTYDHT (141 aa). The segment at 33–56 is disordered; it reads LAAGTSNPDPPTVSTDQLLPLGGG. Over residues 36-49 the composition is skewed to polar residues; the sequence is GTSNPDPPTVSTDQ. O-linked (GalNAc...) threonine glycosylation is present at Thr-37. Ser-38 is a glycosylation site (O-linked (GalNAc...) serine). Residues Thr-44, Thr-47, Thr-75, and Thr-85 are each glycosylated (O-linked (GalNAc...) threonine). A disordered region spans residues 82–104; that stretch reads ALATPNKEEHGKRKKKGKGLGKK. Over residues 93-102 the composition is skewed to basic residues; it reads KRKKKGKGLG. Positions 104–144 constitute an EGF-like domain; the sequence is KRDPCLRKYKDFCIHGECKYVKELRAPSCICHPGYHGERCH. Disulfide bonds link Cys-108-Cys-121, Cys-116-Cys-132, and Cys-134-Cys-143. Positions 149-208 are cleaved as a propeptide — C-terminal; that stretch reads PVENRLYTYDHTTILAVVAVVLSSVCLLVIVGLLMFRYHRRGGYDVENEEKVKLGMTNSH. A helical transmembrane segment spans residues 161-184; sequence TILAVVAVVLSSVCLLVIVGLLMF. Residues 185–208 are Cytoplasmic-facing; the sequence is RYHRRGGYDVENEEKVKLGMTNSH.

As to quaternary structure, interacts with FBLN1. Interacts with EGFR and ERBB4. Several N-termini have been identified by direct sequencing. The forms with N-termini 63, 73 and 74 have been tested and found to be biologically active. In terms of processing, O-glycosylated with core 1 or possibly core 8 glycans. Thr-47 is a minor glycosylation site compared to Thr-44.

It is found in the secreted. Its subcellular location is the extracellular space. The protein resides in the cell membrane. Functionally, growth factor that mediates its effects via EGFR, ERBB2 and ERBB4. Required for normal cardiac valve formation and normal heart function. Promotes smooth muscle cell proliferation. May be involved in macrophage-mediated cellular proliferation. It is mitogenic for fibroblasts, but not endothelial cells. It is able to bind EGF receptor/EGFR with higher affinity than EGF itself and is a far more potent mitogen for smooth muscle cells than EGF. Also acts as a diphtheria toxin receptor. This Homo sapiens (Human) protein is Proheparin-binding EGF-like growth factor (HBEGF).